The sequence spans 403 residues: FAD-dependent monooxygenase tazP (403 aa).

FAD is bound by residues Gly75, Arg144, Asp354, and Ala367.

The protein belongs to the paxM FAD-dependent monooxygenase family. FAD is required as a cofactor.

Its pathway is secondary metabolite biosynthesis. In terms of biological role, FAD-dependent monooxygenase; part of the gene cluster that mediates the biosynthesis of azaterrilone A and other azaphilones, a class of fungal metabolites characterized by a highly oxygenated pyrano-quinone bicyclic core and exhibiting a broad range of bioactivities. The first step of the pathway begins with the non-reducing polyketide synthase tazA that assembles one acetyl-CoA starter unit, five malonyl-CoA units, and catalyzes a series of Claisen condensations, methylation, PT-mediated cyclization, and finally releases the first hexaketide precursor through the R-domain. The tazA product then undergoes reduction on its terminal ketone and the following pyran-ring formation by yet undetermined enzyme(s). Dehydration and enoyl reduction, possibly involving the trans-enoyl reductase tazE leads to the next intermediate. TazD is predicted as an acetyltransferase and might catalyze the acetylation steps leading to the synthesis of azaterrilone A. Azaterrilone A is not the final product of the taz pathway and both the highly reducing polyketide synthase tazB and the dual enzyme tazHJ catalyze late steps of the pathway, leading to the production of the 2 final stereoisomers that contain additional polyketide modification whose structures have still to be determined. The chain is FAD-dependent monooxygenase tazP from Aspergillus terreus (strain NIH 2624 / FGSC A1156).